The chain runs to 648 residues: p-hydroxybenzoic acid efflux pump subunit AaeB (648 aa).

11 consecutive transmembrane segments (helical) span residues 11-31 (FACK…YFGL), 41-61 (AALV…AGAI), 65-87 (GWLR…MLLI), 91-110 (LLMI…LSSL), 125-145 (TALI…QLAL), 150-170 (EIVL…PRSV), 369-389 (LFWL…IAVV), 406-426 (FLMG…VILP), 430-450 (QSLV…GMEV), 455-474 (LGSL…SNPM), and 481-501 (FVDS…VLLA).

It belongs to the aromatic acid exporter ArAE (TC 2.A.85) family.

It is found in the cell inner membrane. In terms of biological role, forms an efflux pump with AaeA. Could function as a metabolic relief valve, allowing to eliminate certain compounds when they accumulate to high levels in the cell. The polypeptide is p-hydroxybenzoic acid efflux pump subunit AaeB (aaeB) (Edwardsiella tarda (strain FL6-60)).